The chain runs to 648 residues: Macrolide export ATP-binding/permease protein MacB (648 aa).

Positions 5–243 (LELKDIRRSY…AGGTEPVVNT (239 aa)) constitute an ABC transporter domain. Residue 41–48 (GASGSGKS) participates in ATP binding. Helical transmembrane passes span 273 to 293 (LLTMLGIIIGIASVVSIVVVG), 523 to 543 (LFLTLVAVISLVVGGIGVMNI), 576 to 596 (AVLVCLVGGALGITLSLLIAF), and 600 to 620 (LFLPGWEIGFSPLALLLAFLC).

Belongs to the ABC transporter superfamily. Macrolide exporter (TC 3.A.1.122) family. As to quaternary structure, homodimer. Part of the tripartite efflux system MacAB-TolC, which is composed of an inner membrane transporter, MacB, a periplasmic membrane fusion protein, MacA, and an outer membrane component, TolC. The complex forms a large protein conduit and can translocate molecules across both the inner and outer membranes. Interacts with MacA.

It is found in the cell inner membrane. Functionally, part of the tripartite efflux system MacAB-TolC. MacB is a non-canonical ABC transporter that contains transmembrane domains (TMD), which form a pore in the inner membrane, and an ATP-binding domain (NBD), which is responsible for energy generation. Confers resistance against macrolides. The protein is Macrolide export ATP-binding/permease protein MacB of Shigella boydii serotype 4 (strain Sb227).